We begin with the raw amino-acid sequence, 656 residues long: CoB--CoM heterodisulfide reductase iron-sulfur subunit A 2 (656 aa).

Residue 152–175 coordinates FAD; the sequence is GGGVSGIQAALDLADMGFEVILVE. 4Fe-4S ferredoxin-type domains follow at residues 238-269, 286-315, 577-606, and 610-639; these read KKPR…FDEG, SVFT…FDQE, IVSE…LVEK, and LVAE…QNHF. [4Fe-4S] cluster-binding residues include Cys248, Cys251, Cys254, Cys258, Cys295, Cys298, Cys301, Cys305, Cys586, Cys589, Cys592, Cys596, Cys619, Cys622, Cys625, and Cys629.

The protein belongs to the HdrA family. The ferredoxin:CoB-CoM heterodisulfide reductase is composed of three subunits; HdrA, HdrB and HdrC. [4Fe-4S] cluster is required as a cofactor. It depends on FAD as a cofactor.

The protein operates within cofactor metabolism; coenzyme M-coenzyme B heterodisulfide reduction; coenzyme B and coenzyme M from coenzyme M-coenzyme B heterodisulfide: step 1/1. Functionally, part of a complex that catalyzes the reversible reduction of CoM-S-S-CoB to the thiol-coenzymes H-S-CoM (coenzyme M) and H-S-CoB (coenzyme B). This chain is CoB--CoM heterodisulfide reductase iron-sulfur subunit A 2 (hdrA2), found in Methanopyrus kandleri (strain AV19 / DSM 6324 / JCM 9639 / NBRC 100938).